The sequence spans 384 residues: Flap endonuclease 1 (384 aa).

Residues 1 to 105 (MGIKKLTDLI…GELAKRQARR (105 aa)) form an N-domain region. Position 34 (aspartate 34) interacts with Mg(2+). DNA is bound at residue arginine 71. Mg(2+) is bound by residues aspartate 87, glutamate 159, glutamate 161, aspartate 180, and aspartate 182. Positions 123 to 254 (EVQKFAKRVI…KRAIELIQKH (132 aa)) are I-domain. Glutamate 159 is a binding site for DNA. DNA-binding residues include glycine 232 and aspartate 234. Aspartate 234 lines the Mg(2+) pocket. An interaction with PCNA region spans residues 338-346 (VQSRMDSFI). Residues 349-384 (IKKPEDPNDKKKKVTKTPSKPSAKTSKKSSSTFKRK) form a disordered region. A compositionally biased stretch (low complexity) spans 364–384 (KTPSKPSAKTSKKSSSTFKRK).

It belongs to the XPG/RAD2 endonuclease family. FEN1 subfamily. Interacts with PCNA. Three molecules of repg bind to one PCNA trimer with each molecule binding to one PCNA monomer. PCNA stimulates the nuclease activity without altering cleavage specificity. Mg(2+) serves as cofactor. Post-translationally, phosphorylated. Phosphorylation upon DNA damage induces relocalization to the nuclear plasma.

The protein localises to the nucleus. The protein resides in the nucleolus. Its subcellular location is the nucleoplasm. It is found in the mitochondrion. Its function is as follows. Structure-specific nuclease with 5'-flap endonuclease and 5'-3' exonuclease activities involved in DNA replication and repair. During DNA replication, cleaves the 5'-overhanging flap structure that is generated by displacement synthesis when DNA polymerase encounters the 5'-end of a downstream Okazaki fragment. It enters the flap from the 5'-end and then tracks to cleave the flap base, leaving a nick for ligation. Also involved in the long patch base excision repair (LP-BER) pathway, by cleaving within the apurinic/apyrimidinic (AP) site-terminated flap. Acts as a genome stabilization factor that prevents flaps from equilibrating into structures that lead to duplications and deletions. Also possesses 5'-3' exonuclease activity on nicked or gapped double-stranded DNA, and exhibits RNase H activity. Also involved in replication and repair of rDNA and in repairing mitochondrial DNA. In Dictyostelium discoideum (Social amoeba), this protein is Flap endonuclease 1.